We begin with the raw amino-acid sequence, 273 residues long: 3-methyl-2-oxobutanoate hydroxymethyltransferase (273 aa).

Mg(2+) is bound by residues Asp-53 and Asp-92. 3-methyl-2-oxobutanoate is bound by residues 53 to 54 (DS), Asp-92, and Lys-120. A Mg(2+)-binding site is contributed by Glu-122. Residue Glu-189 is the Proton acceptor of the active site.

It belongs to the PanB family. Homodecamer; pentamer of dimers. Requires Mg(2+) as cofactor.

The protein localises to the cytoplasm. The catalysed reaction is 3-methyl-2-oxobutanoate + (6R)-5,10-methylene-5,6,7,8-tetrahydrofolate + H2O = 2-dehydropantoate + (6S)-5,6,7,8-tetrahydrofolate. It participates in cofactor biosynthesis; (R)-pantothenate biosynthesis; (R)-pantoate from 3-methyl-2-oxobutanoate: step 1/2. Catalyzes the reversible reaction in which hydroxymethyl group from 5,10-methylenetetrahydrofolate is transferred onto alpha-ketoisovalerate to form ketopantoate. The sequence is that of 3-methyl-2-oxobutanoate hydroxymethyltransferase from Cupriavidus taiwanensis (strain DSM 17343 / BCRC 17206 / CCUG 44338 / CIP 107171 / LMG 19424 / R1) (Ralstonia taiwanensis (strain LMG 19424)).